The primary structure comprises 194 residues: CASP-like protein 1D1 (194 aa).

The span at 1–16 (MGSDETKSTLDTERST) shows a compositional bias: basic and acidic residues. The disordered stretch occupies residues 1-23 (MGSDETKSTLDTERSTVPRTGTT). At 1-31 (MGSDETKSTLDTERSTVPRTGTTTKSCSITQ) the chain is on the cytoplasmic side. The chain crosses the membrane as a helical span at residues 32–52 (VVLRFVLFAATLTSIVVMVTS). The Extracellular portion of the chain corresponds to 53-77 (KQTKNIFIPGTPIRIPAAKFTNSPA). The helical transmembrane segment at 78-98 (LIYFVVALSVACFYSIVSTFV) threads the bilayer. The Cytoplasmic portion of the chain corresponds to 99-109 (TVSAFKKHSCS). The helical transmembrane segment at 110 to 130 (AILLLNLAIMDAVMVGIVASA) threads the bilayer. The Extracellular portion of the chain corresponds to 131–163 (TGAGGGVAYLGLKGNKEVRWGKICNIYDKFCRH). A helical transmembrane segment spans residues 164 to 184 (VGGAIAVSLFASVILLLLSII). Topologically, residues 185–194 (SVLSLYKKIR) are cytoplasmic.

It belongs to the Casparian strip membrane proteins (CASP) family. Homodimer and heterodimers.

It is found in the cell membrane. This is CASP-like protein 1D1 from Arabidopsis lyrata subsp. lyrata (Lyre-leaved rock-cress).